The following is a 63-amino-acid chain: Male-specific sperm protein Mst84Da (63 aa).

This sequence belongs to the MST(3)CGP family. Testis.

In Drosophila melanogaster (Fruit fly), this protein is Male-specific sperm protein Mst84Da (Mst84Da).